The primary structure comprises 148 residues: Probable 4-amino-4-deoxy-L-arabinose-phosphoundecaprenol flippase subunit ArnF (148 aa).

Over 1 to 23 (MRGDNTGVGKEPAVTERPAIKGY) the chain is Cytoplasmic. A helical membrane pass occupies residues 24–44 (LYVLGSILLVTLAQLAMKWGV). The Periplasmic segment spans residues 45 to 63 (MQLPAWQASLDIMLAHPVP). Residues 64-84 (LLVITAGVGCYALSLLCWLAA) traverse the membrane as a helical segment. Residues 85–91 (LHFTPLN) are Cytoplasmic-facing. Residues 92–112 (IAYPLLSTSYALVYLLAVSIP) form a helical membrane-spanning segment. Residues 113–117 (SFAEP) are Periplasmic-facing. The helical transmembrane segment at 118-138 (LEPGKAVGVIFILLGAVLVGI) threads the bilayer. Over 139 to 148 (KPVGRKRNAH) the chain is Cytoplasmic.

The protein belongs to the ArnF family. As to quaternary structure, heterodimer of ArnE and ArnF.

The protein resides in the cell inner membrane. The protein operates within bacterial outer membrane biogenesis; lipopolysaccharide biosynthesis. Translocates 4-amino-4-deoxy-L-arabinose-phosphoundecaprenol (alpha-L-Ara4N-phosphoundecaprenol) from the cytoplasmic to the periplasmic side of the inner membrane. The protein is Probable 4-amino-4-deoxy-L-arabinose-phosphoundecaprenol flippase subunit ArnF of Aeromonas salmonicida (strain A449).